A 103-amino-acid polypeptide reads, in one-letter code: Ribonuclease VapC14 (103 aa).

Positions 3 to 74 (YVLDTNVVSA…WFDDKVLRIF (72 aa)) constitute a PINc domain. Residue Asp6 coordinates Mg(2+).

Belongs to the PINc/VapC protein family. It depends on Mg(2+) as a cofactor.

Its function is as follows. Toxic component of a type II toxin-antitoxin (TA) system. An RNase. The cognate antitoxin is VapB14. This chain is Ribonuclease VapC14 (vapC14), found in Mycobacterium tuberculosis (strain CDC 1551 / Oshkosh).